The primary structure comprises 362 residues: tRNA N6-adenosine threonylcarbamoyltransferase (362 aa).

Fe cation is bound by residues His-116 and His-120. Substrate is bound by residues 138 to 142 (LVSGG), Asp-171, Gly-184, and Asn-284. Asp-312 contributes to the Fe cation binding site.

This sequence belongs to the KAE1 / TsaD family. It depends on Fe(2+) as a cofactor.

The protein resides in the cytoplasm. It carries out the reaction L-threonylcarbamoyladenylate + adenosine(37) in tRNA = N(6)-L-threonylcarbamoyladenosine(37) in tRNA + AMP + H(+). Functionally, required for the formation of a threonylcarbamoyl group on adenosine at position 37 (t(6)A37) in tRNAs that read codons beginning with adenine. Is involved in the transfer of the threonylcarbamoyl moiety of threonylcarbamoyl-AMP (TC-AMP) to the N6 group of A37, together with TsaE and TsaB. TsaD likely plays a direct catalytic role in this reaction. The polypeptide is tRNA N6-adenosine threonylcarbamoyltransferase (Chelativorans sp. (strain BNC1)).